A 1997-amino-acid chain; its full sequence is Autophagy-related protein 2 homolog A (1997 aa).

In terms of domain architecture, Chorein N-terminal spans 17 to 119; sequence CRYLLQHYLG…RGAAQGTESQ (103 aa). 5 disordered regions span residues 241 to 281, 1292 to 1323, 1371 to 1414, 1492 to 1534, and 1684 to 1718; these read TSVQ…IQQI, HCPPKPEPPTEIAGQKLQPPEGPSSLPPCLPA, EEIK…TDTD, SSRP…TQGG, and RLDGPAKSSSDCELEQETSQGSTEDETMSPSSSTD. Positions 1311–1321 are enriched in pro residues; the sequence is PEGPSSLPPCL. Polar residues-rich tracts occupy residues 1393–1408, 1493–1532, and 1690–1718; these read RVSQESLGLSDTSGDS, SRPNSARAQSPRSRTSFHNARGSPSRSSVTNRPQNTWRTQ, and KSSSDCELEQETSQGSTEDETMSPSSSTD.

This sequence belongs to the ATG2 family.

It localises to the preautophagosomal structure membrane. Its subcellular location is the lipid droplet. The protein localises to the endoplasmic reticulum membrane. The catalysed reaction is a 1,2-diacyl-sn-glycero-3-phospho-L-serine(in) = a 1,2-diacyl-sn-glycero-3-phospho-L-serine(out). It catalyses the reaction a 1,2-diacyl-sn-glycero-3-phosphoethanolamine(in) = a 1,2-diacyl-sn-glycero-3-phosphoethanolamine(out). Functionally, lipid transfer protein involved in autophagosome assembly. Tethers the edge of the isolation membrane (IM) to the endoplasmic reticulum (ER) and mediates direct lipid transfer from ER to IM for IM expansion. Binds to the ER exit site (ERES), which is the membrane source for autophagosome formation, and extracts phospholipids from the membrane source and transfers them to atg9 (atg9a or atg9b) to the IM for membrane expansion. Also regulates lipid droplets morphology and distribution within the cell. The sequence is that of Autophagy-related protein 2 homolog A from Xenopus tropicalis (Western clawed frog).